The following is a 299-amino-acid chain: Neomycin C epimerase (299 aa).

Positions 10–222 constitute a Radical SAM core domain; sequence PVRQVRAYRN…WNHIFETGRR (213 aa). Residues Cys-26, Cys-30, Cys-33, Cys-226, and Cys-247 each coordinate [4Fe-4S] cluster. Cys-249 acts as the Proton donor in catalysis. [4Fe-4S] cluster-binding residues include Cys-271 and Cys-274.

Belongs to the radical SAM superfamily. It depends on [4Fe-4S] cluster as a cofactor.

It carries out the reaction neomycin C + AH2 + S-adenosyl-L-methionine = neomycin B + 5'-deoxyadenosine + L-methionine + A + H(+). It functions in the pathway antibiotic biosynthesis; neomycin biosynthesis. Catalyzes the last step of neomycin B biosynthesis, i.e. the irreversible epimerization at C-5''' of neomycin C to give neomycin B. To a lesser extent, is also able to convert neomycin Y2 to neomycin Y1. The sequence is that of Neomycin C epimerase from Streptomyces fradiae (Streptomyces roseoflavus).